A 763-amino-acid chain; its full sequence is Palmitoyltransferase AKR1 (763 aa).

Positions 1–15 are enriched in polar residues; the sequence is MEDNSEQASVSSQAS. Residues 1-59 form a disordered region; the sequence is MEDNSEQASVSSQASMRPLVSDNGDREAGAGVEVNIANDNDTSVGVDGENGNEDDDPIL. The Cytoplasmic portion of the chain corresponds to 1–307; sequence MEDNSEQASV…KLVKRDDHAK (307 aa). 7 ANK repeats span residues 57 to 87, 92 to 121, 126 to 155, 159 to 188, 197 to 226, 230 to 259, and 292 to 322; these read PILS…NVSS, EGVT…NVES, LEAT…SATT, QGFN…SKGI, KGRT…SVKI, GGFT…DFFQ, and NGYP…GFAF. Residues 308–325 traverse the membrane as a helical segment; it reads IITFLIPLLVLGFAFFGF. The Lumenal segment spans residues 326-330; that stretch reads SHLHI. Residues 331–348 traverse the membrane as a helical segment; that stretch reads LFALPVIILLLLASNKFI. The Cytoplasmic segment spans residues 349 to 368; sequence KSFLLPSYETKGTNSASLLK. Residues 369-389 form a helical membrane-spanning segment; it reads SPLIAGILFGSIFWLAFVWIL. Residues 390–401 lie on the Lumenal side of the membrane; sequence RILPYTFTKRPL. Residues 402-422 form a helical membrane-spanning segment; it reads GNLTFCAILCFVCYSLFLLAF. The Cytoplasmic segment spans residues 423–497; sequence SDPGHIGSEN…YNDVGLKNHK (75 aa). One can recognise a DHHC domain in the interval 454 to 504; sequence SFCLETWVRKPLRSKYSYLNDALILRFDHYCPWIYNDVGLKNHKLFIFFIL. The active-site S-palmitoyl cysteine intermediate is C484. A helical transmembrane segment spans residues 498-518; sequence LFIFFILALELGIFSFVKVCL. Over 519 to 546 the chain is Lumenal; sequence KYFDELDMDGDCFILGDDDLCSGLIGDR. The helical transmembrane segment at 547–567 threads the bilayer; that stretch reads FTFLIMTWACIQAVWIFSLVI. The Cytoplasmic portion of the chain corresponds to 568-763; it reads VQLFQITKGL…DPLSEIDDMV (196 aa).

It belongs to the DHHC palmitoyltransferase family. AKR/ZDHHC17 subfamily.

The protein localises to the early endosome membrane. The protein resides in the golgi apparatus membrane. It carries out the reaction L-cysteinyl-[protein] + hexadecanoyl-CoA = S-hexadecanoyl-L-cysteinyl-[protein] + CoA. Functionally, palmitoyltransferase specific for casein kinase 1. The sequence is that of Palmitoyltransferase AKR1 (AKR1) from Candida glabrata (strain ATCC 2001 / BCRC 20586 / JCM 3761 / NBRC 0622 / NRRL Y-65 / CBS 138) (Yeast).